A 356-amino-acid chain; its full sequence is UDP-N-acetylglucosamine--N-acetylmuramyl-(pentapeptide) pyrophosphoryl-undecaprenol N-acetylglucosamine transferase (356 aa).

UDP-N-acetyl-alpha-D-glucosamine is bound by residues 12–14 (TGG), N124, R163, S188, I242, 261–266 (ALTVSE), and Q287.

Belongs to the glycosyltransferase 28 family. MurG subfamily.

It localises to the cell inner membrane. It carries out the reaction di-trans,octa-cis-undecaprenyl diphospho-N-acetyl-alpha-D-muramoyl-L-alanyl-D-glutamyl-meso-2,6-diaminopimeloyl-D-alanyl-D-alanine + UDP-N-acetyl-alpha-D-glucosamine = di-trans,octa-cis-undecaprenyl diphospho-[N-acetyl-alpha-D-glucosaminyl-(1-&gt;4)]-N-acetyl-alpha-D-muramoyl-L-alanyl-D-glutamyl-meso-2,6-diaminopimeloyl-D-alanyl-D-alanine + UDP + H(+). It participates in cell wall biogenesis; peptidoglycan biosynthesis. Functionally, cell wall formation. Catalyzes the transfer of a GlcNAc subunit on undecaprenyl-pyrophosphoryl-MurNAc-pentapeptide (lipid intermediate I) to form undecaprenyl-pyrophosphoryl-MurNAc-(pentapeptide)GlcNAc (lipid intermediate II). This is UDP-N-acetylglucosamine--N-acetylmuramyl-(pentapeptide) pyrophosphoryl-undecaprenol N-acetylglucosamine transferase from Ectopseudomonas mendocina (strain ymp) (Pseudomonas mendocina).